Here is a 976-residue protein sequence, read N- to C-terminus: Ephrin type-A receptor 1 (976 aa).

A signal peptide spans 1-25; sequence MERRWPLGLGLVLLLCAPLPPGARA. Over 26-547 the chain is Extracellular; it reads KEVTLMDTSK…PVSRGLTGGE (522 aa). In terms of domain architecture, Eph LBD spans 27-209; the sequence is EVTLMDTSKA…FYQRCPETLN (183 aa). 2 Fibronectin type-III domains span residues 332 to 445 and 447 to 538; these read PPSA…MGHA and SLSG…TSPP. The N-linked (GlcNAc...) asparagine glycan is linked to Asn414. Residues 548–568 form a helical membrane-spanning segment; the sequence is IVAVIFGLLLGAALLLGILVF. The Cytoplasmic portion of the chain corresponds to 569-976; the sequence is RSRRAQRQRQ…ILCSIQGFKD (408 aa). Phosphotyrosine; by autocatalysis is present on residues Tyr599 and Tyr605. Residues 624–884 enclose the Protein kinase domain; the sequence is LMVDTVIGEG…KLQAHLEQLL (261 aa). ATP contacts are provided by residues 630–638 and Lys656; that span reads IGEGEFGEV. The active-site Proton acceptor is Asp749. Residue Tyr781 is modified to Phosphotyrosine; by autocatalysis. Phosphoserine is present on residues Ser906 and Ser910. The region spanning 913-976 is the SAM domain; it reads IPYRTVSEWL…ILCSIQGFKD (64 aa). Tyr930 carries the phosphotyrosine; by autocatalysis modification. The PDZ-binding signature appears at 974–976; that stretch reads FKD.

The protein belongs to the protein kinase superfamily. Tyr protein kinase family. Ephrin receptor subfamily. In terms of assembly, homodimer. Forms a signaling complex with LCK; PTK2B/PYK2 and PI3-kinase upon activation by EFNA1; regulates T-lymphocytes migration. Interacts (via SAM domain) with ILK (via ANK repeats); stimulated by EFNA1 but independent of the kinase activity of EPHA1. Interacts (kinase activity-dependent) with PTK2/FAK1. In terms of processing, phosphorylated. Autophosphorylation is stimulated by its ligand EFNA1. Post-translationally, ubiquitinated. In terms of tissue distribution, overexpressed in several carcinomas.

It is found in the cell membrane. The catalysed reaction is L-tyrosyl-[protein] + ATP = O-phospho-L-tyrosyl-[protein] + ADP + H(+). In terms of biological role, receptor tyrosine kinase which binds promiscuously membrane-bound ephrin-A family ligands residing on adjacent cells, leading to contact-dependent bidirectional signaling into neighboring cells. The signaling pathway downstream of the receptor is referred to as forward signaling while the signaling pathway downstream of the ephrin ligand is referred to as reverse signaling. Binds with a low affinity EFNA3 and EFNA4 and with a high affinity to EFNA1 which most probably constitutes its cognate/functional ligand. Upon activation by EFNA1 induces cell attachment to the extracellular matrix inhibiting cell spreading and motility through regulation of ILK and downstream RHOA and RAC. Also plays a role in angiogenesis and regulates cell proliferation. May play a role in apoptosis. The sequence is that of Ephrin type-A receptor 1 (EPHA1) from Homo sapiens (Human).